Consider the following 346-residue polypeptide: Small ribosomal subunit biogenesis GTPase RsgA (346 aa).

Residues 1 to 25 form a disordered region; sequence MAKRKLTQNQTRRIQSNNAKTLHRH. Residues 7–20 show a composition bias toward polar residues; it reads TQNQTRRIQSNNAK. Residues 103–271 form the CP-type G domain; sequence ENEISRPDYY…LIDSPGIREF (169 aa). GTP-binding positions include 159–162 and 213–221; these read NKVD and GQSGVGKSS. The Zn(2+) site is built by cysteine 295, cysteine 300, histidine 302, and cysteine 308.

It belongs to the TRAFAC class YlqF/YawG GTPase family. RsgA subfamily. As to quaternary structure, monomer. Associates with 30S ribosomal subunit, binds 16S rRNA. Requires Zn(2+) as cofactor.

The protein localises to the cytoplasm. Its function is as follows. One of several proteins that assist in the late maturation steps of the functional core of the 30S ribosomal subunit. Helps release RbfA from mature subunits. May play a role in the assembly of ribosomal proteins into the subunit. Circularly permuted GTPase that catalyzes slow GTP hydrolysis, GTPase activity is stimulated by the 30S ribosomal subunit. This is Small ribosomal subunit biogenesis GTPase RsgA from Haemophilus influenzae (strain ATCC 51907 / DSM 11121 / KW20 / Rd).